The primary structure comprises 208 residues: Large ribosomal subunit protein bL9 (208 aa).

A disordered region spans residues 168–208 (GKVEKGSCTEGESLELGSVDNDINSGNVDSNESEKQDSVSE). The segment covering 188 to 197 (NDINSGNVDS) has biased composition (polar residues). Positions 199–208 (ESEKQDSVSE) are enriched in basic and acidic residues.

Belongs to the bacterial ribosomal protein bL9 family.

Its function is as follows. Binds to the 23S rRNA. The polypeptide is Large ribosomal subunit protein bL9 (Ehrlichia chaffeensis (strain ATCC CRL-10679 / Arkansas)).